A 355-amino-acid chain; its full sequence is Phosphoribosylformylglycinamidine cyclo-ligase (355 aa).

It belongs to the AIR synthase family.

Its subcellular location is the cytoplasm. The enzyme catalyses 2-formamido-N(1)-(5-O-phospho-beta-D-ribosyl)acetamidine + ATP = 5-amino-1-(5-phospho-beta-D-ribosyl)imidazole + ADP + phosphate + H(+). The protein operates within purine metabolism; IMP biosynthesis via de novo pathway; 5-amino-1-(5-phospho-D-ribosyl)imidazole from N(2)-formyl-N(1)-(5-phospho-D-ribosyl)glycinamide: step 2/2. The chain is Phosphoribosylformylglycinamidine cyclo-ligase from Paraburkholderia phymatum (strain DSM 17167 / CIP 108236 / LMG 21445 / STM815) (Burkholderia phymatum).